We begin with the raw amino-acid sequence, 208 residues long: Large ribosomal subunit protein uL4 (208 aa).

The segment at 50 to 83 is disordered; the sequence is VKTRAEVSGGGRKPWKQKGTGRARQGSIRAPQWK.

Belongs to the universal ribosomal protein uL4 family. As to quaternary structure, part of the 50S ribosomal subunit.

Its function is as follows. One of the primary rRNA binding proteins, this protein initially binds near the 5'-end of the 23S rRNA. It is important during the early stages of 50S assembly. It makes multiple contacts with different domains of the 23S rRNA in the assembled 50S subunit and ribosome. In terms of biological role, forms part of the polypeptide exit tunnel. This Mycoplasma mycoides subsp. mycoides SC (strain CCUG 32753 / NCTC 10114 / PG1) protein is Large ribosomal subunit protein uL4.